The primary structure comprises 234 residues: Phosphoglycolate phosphatase (234 aa).

Asp-9 acts as the Nucleophile in catalysis. Mg(2+) contacts are provided by Asp-9 and Asp-11. Lys-162 provides a ligand contact to substrate. 2 residues coordinate Mg(2+): Asp-185 and Asp-189.

The protein belongs to the archaeal SPP-like hydrolase family. Mg(2+) is required as a cofactor.

It carries out the reaction 2-phosphoglycolate + H2O = glycolate + phosphate. Functionally, catalyzes the dephosphorylation of 2-phosphoglycolate. The sequence is that of Phosphoglycolate phosphatase from Methanobrevibacter smithii (strain ATCC 35061 / DSM 861 / OCM 144 / PS).